The following is a 152-amino-acid chain: FMN reductase (NADH) RutF (152 aa).

This sequence belongs to the non-flavoprotein flavin reductase family. RutF subfamily.

It catalyses the reaction FMNH2 + NAD(+) = FMN + NADH + 2 H(+). In terms of biological role, catalyzes the reduction of FMN to FMNH2 which is used to reduce pyrimidine by RutA via the Rut pathway. In Shigella dysenteriae serotype 1 (strain Sd197), this protein is FMN reductase (NADH) RutF.